We begin with the raw amino-acid sequence, 240 residues long: REF/SRPP-like protein At1g67360 (240 aa).

Positions 208 to 240 are disordered; that stretch reads KEDARRKKGGDTAGKKGETTDAADGDKSSSDSE.

This sequence belongs to the REF/SRPP family.

This chain is REF/SRPP-like protein At1g67360, found in Arabidopsis thaliana (Mouse-ear cress).